Consider the following 521-residue polypeptide: GMP synthase [glutamine-hydrolyzing] (521 aa).

The 196-residue stretch at Lys8–Leu203 folds into the Glutamine amidotransferase type-1 domain. The active-site Nucleophile is Cys85. Active-site residues include His177 and Glu179. The GMPS ATP-PPase domain maps to Trp204–Arg396. Residue Ser231 to Ser237 participates in ATP binding.

Homodimer.

It catalyses the reaction XMP + L-glutamine + ATP + H2O = GMP + L-glutamate + AMP + diphosphate + 2 H(+). It participates in purine metabolism; GMP biosynthesis; GMP from XMP (L-Gln route): step 1/1. In terms of biological role, catalyzes the synthesis of GMP from XMP. The polypeptide is GMP synthase [glutamine-hydrolyzing] (Xanthomonas campestris pv. campestris (strain B100)).